The following is a 570-amino-acid chain: Cation/calcium exchanger 1 (570 aa).

13 helical membrane passes run 14-34 (LSLLINIFFIFLIFLHFASQT), 97-117 (SPVLGHLVLSAWLFVLFYLLG), 141-161 (MAGVTLLSLGNGAPDLFSSVV), 176-196 (ILGGAFFVSSFVVGTICVLIG), 212-232 (VFLLVALCCLGLIIFIGKVTI), 235-255 (ALCYLSIYLLYVGFLSVSHFF), 344-364 (CAVVSTAIAPVLLTELYCSHY), 371-391 (LILYIISGSIGLIVGILAYLT), 401-421 (FSLVWLLGGFTMSVTWTYMIA), 427-447 (LLISLGNIFGISPSVLGLTVL), 479-499 (YAGPLFNTVIGLGVPLVISSL), 513-533 (SLLETLGFLMVGLLWALVIMP), and 546-566 (GLLAIYLCFLSLRLARVFGVL).

Belongs to the Ca(2+):cation antiporter (CaCA) (TC 2.A.19) family. Cation/calcium exchanger (CCX) subfamily. Expressed in roots, leaves, stems and flowers.

It localises to the vacuole membrane. Its function is as follows. Vacuolar membrane-localized H(+)-dependent K(+) and Na(+) transporter. The polypeptide is Cation/calcium exchanger 1 (CCX1) (Arabidopsis thaliana (Mouse-ear cress)).